Consider the following 500-residue polypeptide: Replication factor C large subunit (500 aa).

Residue 44–51 (GSPGVGKT) coordinates ATP. The tract at residues 443–500 (HAADDLGASDGETTNASGTASSSGDDGDADGTTDGDGSDANDGNDDDDDGQAGLSDFV) is disordered. The segment covering 455–466 (TTNASGTASSSG) has biased composition (low complexity). Acidic residues predominate over residues 467–492 (DDGDADGTTDGDGSDANDGNDDDDDG).

The protein belongs to the activator 1 small subunits family. RfcL subfamily. In terms of assembly, heteromultimer composed of small subunits (RfcS) and large subunits (RfcL).

In terms of biological role, part of the RFC clamp loader complex which loads the PCNA sliding clamp onto DNA. The polypeptide is Replication factor C large subunit (Halorubrum lacusprofundi (strain ATCC 49239 / DSM 5036 / JCM 8891 / ACAM 34)).